The following is a 318-amino-acid chain: Myoblast determination protein 1 (318 aa).

Met1 is covalently cross-linked (Peptide (Met-Gly) (interchain with G-Cter in ubiquitin)). Residue Lys104 is modified to N6-methyllysine; by EHMT2. A bHLH domain is found at Asp109–Leu160. Disordered stretches follow at residues Ala175 to Gly224 and Ser262 to Leu318. Residues Ser196–Ser206 show a composition bias toward polar residues. A compositionally biased stretch (low complexity) spans Ser262–Pro271. Pro residues predominate over residues Asp272–Pro282. Residues Ala290 to Gln304 show a composition bias toward polar residues.

In terms of assembly, efficient DNA binding requires dimerization with another bHLH protein. Seems to form active heterodimers with ITF-2. Interacts with SUV39H1. Interacts with DDX5. Interacts with CHD2. Interacts with TSC22D3. Interacts with SETD3. Interacts with P-TEFB complex; promotes the transcriptional activity of MYOD1 through its CDK9-mediated phosphorylation. Interacts with CSRP3. Interacts with NUPR1. Phosphorylated by CDK9. This phosphorylation promotes its function in muscle differentiation. Post-translationally, acetylated by a complex containing EP300 and PCAF. The acetylation is essential to activate target genes. Conversely, its deacetylation by SIRT1 inhibits its function. In terms of processing, ubiquitinated on the N-terminus; which is required for proteasomal degradation. Methylation at Lys-104 by EHMT2/G9a inhibits myogenic activity.

The protein resides in the nucleus. Its function is as follows. Acts as a transcriptional activator that promotes transcription of muscle-specific target genes and plays a role in muscle differentiation. Together with MYF5 and MYOG, co-occupies muscle-specific gene promoter core region during myogenesis. Induces fibroblasts to differentiate into myoblasts. Interacts with and is inhibited by the twist protein. This interaction probably involves the basic domains of both proteins. This chain is Myoblast determination protein 1 (Myod1), found in Rattus norvegicus (Rat).